The primary structure comprises 249 residues: tRNA (guanine-N(1)-)-methyltransferase (249 aa).

S-adenosyl-L-methionine contacts are provided by residues G113 and 133–138 (IGDFVL).

This sequence belongs to the RNA methyltransferase TrmD family. In terms of assembly, homodimer.

It is found in the cytoplasm. It carries out the reaction guanosine(37) in tRNA + S-adenosyl-L-methionine = N(1)-methylguanosine(37) in tRNA + S-adenosyl-L-homocysteine + H(+). In terms of biological role, specifically methylates guanosine-37 in various tRNAs. The chain is tRNA (guanine-N(1)-)-methyltransferase from Aliivibrio fischeri (strain ATCC 700601 / ES114) (Vibrio fischeri).